We begin with the raw amino-acid sequence, 545 residues long: MAELTISSDEIRSAIANYTSSYSPEASREEVGVVTAAADGIAQVSGMPSVMANELLEFPGGVIGVAQNLDTDSVGVVILGNFETLKEGDEVKRTGEVLSIPVGEKFLGRVINPLGQAIDGLGDIESEEERALELQAPSVLMRQPVEEPMQTGIKAIDAMTPIGRGQRQLIIGDRKTGKTSVCIDTILNQRDNWATGDPKQQVRCIYVAVGQKGSTIASIRKTLEDHGALEYTTIVAAPASDSAGFKWLAPFTGAALGQHWMYQGKHVLVIYDDLTKQAEAYRAISLLLRRPPGREAYPGDVFYLHSRLLERAAKLNDELGGGSLTALPIIETKANDVSAFIPTNVISITDGQVFLESDLFNQGVRPAINVGVSVSRVGGAAQTKGMKKVSGSLRLDLAAYRDLEAFAAFASDLDPASKAQLERGKRLVELLKQKETEPQSVEDQMVSIYLAGEGEFDDVPVEDVRRFESELLENLHATHGGVFEQIKGGTPFSDESKAELAGAVQDFKQGFQTTDGTPVINEPEARPLGDDEVTKSQITVSRKTQ.

Residue 172 to 179 coordinates ATP; the sequence is GDRKTGKT. Residues 511–545 are disordered; the sequence is FQTTDGTPVINEPEARPLGDDEVTKSQITVSRKTQ. Over residues 523 to 534 the composition is skewed to basic and acidic residues; sequence PEARPLGDDEVT. Positions 535–545 are enriched in polar residues; that stretch reads KSQITVSRKTQ.

This sequence belongs to the ATPase alpha/beta chains family. As to quaternary structure, F-type ATPases have 2 components, CF(1) - the catalytic core - and CF(0) - the membrane proton channel. CF(1) has five subunits: alpha(3), beta(3), gamma(1), delta(1), epsilon(1). CF(0) has three main subunits: a(1), b(2) and c(9-12). The alpha and beta chains form an alternating ring which encloses part of the gamma chain. CF(1) is attached to CF(0) by a central stalk formed by the gamma and epsilon chains, while a peripheral stalk is formed by the delta and b chains.

Its subcellular location is the cell membrane. The catalysed reaction is ATP + H2O + 4 H(+)(in) = ADP + phosphate + 5 H(+)(out). In terms of biological role, produces ATP from ADP in the presence of a proton gradient across the membrane. The alpha chain is a regulatory subunit. The chain is ATP synthase subunit alpha from Corynebacterium jeikeium (strain K411).